The primary structure comprises 276 residues: Protein canopy homolog 3 (276 aa).

An N-terminal signal peptide occupies residues 1-16 (MNVFISVVLFLGSARA). Positions 30–269 (NKCEVCKFVS…EEEIQKKVPL (240 aa)) constitute a Saposin B-type domain. Cystine bridges form between cysteine 32–cysteine 190, cysteine 35–cysteine 178, and cysteine 88–cysteine 150. The stretch at 137 to 162 (NETSAEVADLKKQCDVMVEQYEDVIE) forms a coiled coil. A disordered region spans residues 206-276 (AEDKKKKKGK…VPLNQPKTEL (71 aa)). 2 stretches are compositionally biased toward basic residues: residues 210–219 (KKKKGKKKKG) and 228–239 (KEKKVKKKKKKS). Basic and acidic residues predominate over residues 240–252 (KISDSESSKRRME).

This sequence belongs to the canopy family.

Its subcellular location is the endoplasmic reticulum. Its function is as follows. Toll-like receptor (TLR)-specific co-chaperone for HSP90B1. Required for proper TLR folding and hence controls TLR exit from the endoplasmic reticulum. Consequently, required for immune responses. This chain is Protein canopy homolog 3 (cnpy3), found in Danio rerio (Zebrafish).